Reading from the N-terminus, the 186-residue chain is uncharacterized protein (186 aa).

This is an uncharacterized protein from Acanthamoeba polyphaga mimivirus (APMV).